The sequence spans 355 residues: 3-dehydroquinate synthase (355 aa).

NAD(+) is bound by residues 105-109 (GVVGD), 129-130 (TS), Lys-142, Lys-151, and 169-172 (TLKT). Residues Glu-184, His-246, and His-263 each contribute to the Zn(2+) site.

The protein belongs to the sugar phosphate cyclases superfamily. Dehydroquinate synthase family. Co(2+) serves as cofactor. Zn(2+) is required as a cofactor. Requires NAD(+) as cofactor.

It localises to the cytoplasm. The catalysed reaction is 7-phospho-2-dehydro-3-deoxy-D-arabino-heptonate = 3-dehydroquinate + phosphate. The protein operates within metabolic intermediate biosynthesis; chorismate biosynthesis; chorismate from D-erythrose 4-phosphate and phosphoenolpyruvate: step 2/7. Functionally, catalyzes the conversion of 3-deoxy-D-arabino-heptulosonate 7-phosphate (DAHP) to dehydroquinate (DHQ). The polypeptide is 3-dehydroquinate synthase (Streptococcus agalactiae serotype Ia (strain ATCC 27591 / A909 / CDC SS700)).